The following is a 250-amino-acid chain: MTSQERGTRRGDTRGNVRDFPDSPADASGLTQRQKKVLEVIRSAVERRGYPPSVREIGEAVGLTSTSSVAHQLKVLQEKGFLRRDPNRPRAMEVLPIGGAKTGGRSRAGAAAAAGAPAETTALEAGTPTYVPLVGRIAAGGPILAEQAIEDVYPLPKEIVGEGTLFLLKVVGQSMINAAICDGDFVVVRQQPVADNGEIVAAMIDGEATVKRFRQRDGRVWLAPENPAFSDIPAEDATILGRIVAVMRRV.

Residues 1–21 (MTSQERGTRRGDTRGNVRDFP) are compositionally biased toward basic and acidic residues. Residues 1 to 33 (MTSQERGTRRGDTRGNVRDFPDSPADASGLTQR) form a disordered region. Positions 54-74 (VREIGEAVGLTSTSSVAHQLK) form a DNA-binding region, H-T-H motif. Catalysis depends on for autocatalytic cleavage activity residues Ser-174 and Lys-211.

This sequence belongs to the peptidase S24 family. In terms of assembly, homodimer.

The catalysed reaction is Hydrolysis of Ala-|-Gly bond in repressor LexA.. In terms of biological role, represses a number of genes involved in the response to DNA damage (SOS response), including recA and lexA. In the presence of single-stranded DNA, RecA interacts with LexA causing an autocatalytic cleavage which disrupts the DNA-binding part of LexA, leading to derepression of the SOS regulon and eventually DNA repair. The chain is LexA repressor from Parafrankia sp. (strain EAN1pec).